Here is a 262-residue protein sequence, read N- to C-terminus: Flap endonuclease Xni (262 aa).

Residue Asp-105 coordinates Mg(2+). Residues 162 to 254 enclose the 5'-3' exonuclease domain; sequence ERSQFLDLMA…LKDFRVIDSL (93 aa). Residues Leu-172, Ala-173, Pro-181, Ile-183, and Ile-186 each contribute to the K(+) site. Residues 185-190 are interaction with DNA; it reads GIGPKS.

It belongs to the Xni family. Requires Mg(2+) as cofactor. It depends on K(+) as a cofactor.

Functionally, has flap endonuclease activity. During DNA replication, flap endonucleases cleave the 5'-overhanging flap structure that is generated by displacement synthesis when DNA polymerase encounters the 5'-end of a downstream Okazaki fragment. The chain is Flap endonuclease Xni from Shewanella baltica (strain OS195).